The chain runs to 389 residues: Type 2 DNA topoisomerase 6 subunit A (389 aa).

Residues 12 to 162 (EARRKAANIL…MLILSKEKGK (151 aa)) enclose the Topo IIA-type catalytic domain. Catalysis depends on tyrosine 106, which acts as the O-(5'-phospho-DNA)-tyrosine intermediate. Mg(2+)-binding residues include glutamate 209 and aspartate 261.

It belongs to the TOP6A family. Homodimer. Heterotetramer of two Top6A and two Top6B chains. Mg(2+) is required as a cofactor.

The catalysed reaction is ATP-dependent breakage, passage and rejoining of double-stranded DNA.. With respect to regulation, not inhibited by the DNA gyrase inhibitor novobiocin, instead inhibited by eukaryotic topoisomerase inhibitors such as m- and o-amsacrine, ellipticine, and the quinolone CP-115,953. Functionally, relaxes both positive and negative supercoils and exhibits a strong decatenase and unknotting activity; it cannot introduce DNA supercoils. ATP is absolutely required for DNA cleavage; the nonhydrolyzable analog AMP-PNP generates nicked or linear products from a supercoiled dsDNA substrate. Generates staggered two-nucleotide long 5' overhangs. The enzyme is covalently attached transiently to the 5'-ends of the cleaved strands. The sequence is that of Type 2 DNA topoisomerase 6 subunit A from Saccharolobus shibatae (strain ATCC 51178 / DSM 5389 / JCM 8931 / NBRC 15437 / B12) (Sulfolobus shibatae).